The chain runs to 2163 residues: Myosin-VIIa (2163 aa).

Residues 58 to 728 (QGVEDMISLG…HDLFLEQERD (671 aa)) enclose the Myosin motor domain. Position 151–158 (151–158 (GESGAGKT)) interacts with ATP. Actin-binding stretches follow at residues 607-629 (LDSL…KPNE) and 707-721 (QLGH…AHDL). 4 IQ domains span residues 731-753 (LTRK…RFLR), 754-783 (MRQA…GYMR), 800-822 (LRGH…EYGL), and 823-852 (KMWA…EYRR). Residues 886 to 914 (RLNEIERKEIEQELEERRRVEVKKNIIND) are a coiled coil. The segment at 937-958 (PDSSSEAPTPHGGRETSVFNDL) is disordered. One can recognise a MyTH4 1 domain in the interval 1003-1239 (YSRKPLKHPL…PSWLELQATK (237 aa)). In terms of domain architecture, FERM 1 spans 1244–1554 (IMLPITFMDG…YFLEGLKKRS (311 aa)). An SH3 domain is found at 1552-1621 (KRSKFVIALQ…PAEIVYVLPS (70 aa)). The 149-residue stretch at 1697–1845 (YSREPLKQPL…PHQVEVEAIQ (149 aa)) folds into the MyTH4 2 domain. The FERM 2 domain maps to 1851–2154 (IFHKVYFPDD…SYISLMLTNM (304 aa)).

The protein belongs to the TRAFAC class myosin-kinesin ATPase superfamily. Myosin family. Homodimerizes in a two headed molecule through the formation of a coiled-coil rod.

Its subcellular location is the cytoplasm. Myosins are actin-based motor molecules with ATPase activity. Unconventional myosins serve in intracellular movements: can function in cells as a single-molecule cargo transporter. A very slow and high-duty-ratio motor, may be suitable for tension maintenance of actin filaments. Their highly divergent tails are presumed to bind to membranous compartments, which would be moved relative to actin filaments. Plays a key role in the formation of cellular projections and other actin-based functions required for embryonic and larval viability. Necessary for auditory transduction: plays a role in Johnston organ (JO) organization by functioning in scolopidial apical attachment and therefore to acoustic stimulus propagation from the antenna a2/a3 joint to transducing elements. In Aedes aegypti (Yellowfever mosquito), this protein is Myosin-VIIa.